The following is a 157-amino-acid chain: Phosphopantetheine adenylyltransferase (157 aa).

A substrate-binding site is contributed by Thr-10. Residues 10 to 11 (TF) and His-18 contribute to the ATP site. Residues Lys-42, Leu-74, and Arg-88 each contribute to the substrate site. ATP contacts are provided by residues 89–91 (GLR), Glu-99, and 124–130 (NAFISSS).

Belongs to the bacterial CoaD family. Homohexamer. Requires Mg(2+) as cofactor.

The protein localises to the cytoplasm. It catalyses the reaction (R)-4'-phosphopantetheine + ATP + H(+) = 3'-dephospho-CoA + diphosphate. Its pathway is cofactor biosynthesis; coenzyme A biosynthesis; CoA from (R)-pantothenate: step 4/5. Tightly binds to CoA, which is presumably a feedback inhibitor. Potently inhibited by D-amethopterin, which simultaneously occupies the 4'-phosphopantetheine- and ATP-binding sites; following treatment with D-amethopterin, H.pylori exhibits morphological characteristics associated with cell death, showing that D-amethopterin displays antimicrobial activity. Reversibly transfers an adenylyl group from ATP to 4'-phosphopantetheine, yielding dephospho-CoA (dPCoA) and pyrophosphate. This chain is Phosphopantetheine adenylyltransferase, found in Helicobacter pylori (strain ATCC 700392 / 26695) (Campylobacter pylori).